A 360-amino-acid polypeptide reads, in one-letter code: Phospho-N-acetylmuramoyl-pentapeptide-transferase (360 aa).

Transmembrane regions (helical) follow at residues 25-45 (RGIL…PWMI), 73-93 (TMGG…WADL), 97-117 (YVWT…VDDY), 132-152 (WKYF…YMTA), 167-187 (TIEI…IVGS), 199-219 (GLAI…CYLS), 236-256 (AGEL…FLWF), 263-283 (VFMG…IAVI), 288-308 (VVLF…MIQV), and 338-358 (VIVR…ATLK).

Belongs to the glycosyltransferase 4 family. MraY subfamily. It depends on Mg(2+) as a cofactor.

It is found in the cell inner membrane. It catalyses the reaction UDP-N-acetyl-alpha-D-muramoyl-L-alanyl-gamma-D-glutamyl-meso-2,6-diaminopimeloyl-D-alanyl-D-alanine + di-trans,octa-cis-undecaprenyl phosphate = di-trans,octa-cis-undecaprenyl diphospho-N-acetyl-alpha-D-muramoyl-L-alanyl-D-glutamyl-meso-2,6-diaminopimeloyl-D-alanyl-D-alanine + UMP. Its pathway is cell wall biogenesis; peptidoglycan biosynthesis. In terms of biological role, catalyzes the initial step of the lipid cycle reactions in the biosynthesis of the cell wall peptidoglycan: transfers peptidoglycan precursor phospho-MurNAc-pentapeptide from UDP-MurNAc-pentapeptide onto the lipid carrier undecaprenyl phosphate, yielding undecaprenyl-pyrophosphoryl-MurNAc-pentapeptide, known as lipid I. This chain is Phospho-N-acetylmuramoyl-pentapeptide-transferase, found in Azotobacter vinelandii (strain DJ / ATCC BAA-1303).